Here is a 113-residue protein sequence, read N- to C-terminus: Integration host factor subunit alpha (113 aa).

Disordered regions lie at residues 59 to 80 (GNFQVRDKPPRPGRNPKTGETI) and 94 to 113 (QKLKSVVEQPNSPPDPASAE). Residues 104–113 (NSPPDPASAE) show a composition bias toward pro residues.

Belongs to the bacterial histone-like protein family. Heterodimer of an alpha and a beta chain.

Its function is as follows. This protein is one of the two subunits of integration host factor, a specific DNA-binding protein that functions in genetic recombination as well as in transcriptional and translational control. This chain is Integration host factor subunit alpha, found in Bordetella pertussis (strain Tohama I / ATCC BAA-589 / NCTC 13251).